Here is a 203-residue protein sequence, read N- to C-terminus: Urease accessory protein UreG (203 aa).

10–17 contacts GTP; sequence GPVGAGKT.

The protein belongs to the SIMIBI class G3E GTPase family. UreG subfamily. In terms of assembly, homodimer. UreD, UreF and UreG form a complex that acts as a GTP-hydrolysis-dependent molecular chaperone, activating the urease apoprotein by helping to assemble the nickel containing metallocenter of UreC. The UreE protein probably delivers the nickel.

It localises to the cytoplasm. In terms of biological role, facilitates the functional incorporation of the urease nickel metallocenter. This process requires GTP hydrolysis, probably effectuated by UreG. The polypeptide is Urease accessory protein UreG (Lachnoclostridium phytofermentans (strain ATCC 700394 / DSM 18823 / ISDg) (Clostridium phytofermentans)).